We begin with the raw amino-acid sequence, 284 residues long: Tryptophan synthase alpha chain (284 aa).

Residues Glu59 and Asp70 each act as proton acceptor in the active site.

This sequence belongs to the TrpA family. In terms of assembly, tetramer of two alpha and two beta chains.

It catalyses the reaction (1S,2R)-1-C-(indol-3-yl)glycerol 3-phosphate + L-serine = D-glyceraldehyde 3-phosphate + L-tryptophan + H2O. Its pathway is amino-acid biosynthesis; L-tryptophan biosynthesis; L-tryptophan from chorismate: step 5/5. In terms of biological role, the alpha subunit is responsible for the aldol cleavage of indoleglycerol phosphate to indole and glyceraldehyde 3-phosphate. This is Tryptophan synthase alpha chain from Azospirillum brasilense.